The chain runs to 87 residues: Mitochondrial import inner membrane translocase subunit TIM8 (87 aa).

A Twin CX3C motif motif is present at residues 44–68; sequence CFKKCISRVDNGNLSSQEEECLASC. 2 cysteine pairs are disulfide-bonded: Cys44/Cys68 and Cys48/Cys64.

The protein belongs to the small Tim family. As to quaternary structure, heterohexamer; composed of 3 copies of TIM8 and 3 copies of TIM13, named soluble 70 kDa complex. Associates with the TIM22 complex, whose core is composed of TIM22 and TIM54. Interacts with the transmembrane regions of multi-pass transmembrane proteins in transit.

It localises to the mitochondrion inner membrane. Its function is as follows. Mitochondrial intermembrane chaperone that participates in the import and insertion of some multi-pass transmembrane proteins into the mitochondrial inner membrane. Also required for the transfer of beta-barrel precursors from the TOM complex to the sorting and assembly machinery (SAM complex) of the outer membrane. Acts as a chaperone-like protein that protects the hydrophobic precursors from aggregation and guide them through the mitochondrial intermembrane space. The TIM8-TIM13 complex is non essential and only mediates the import of few proteins, while the predominant TIM9-TIM10 70 kDa complex is crucial and mediates the import of much more proteins. The sequence is that of Mitochondrial import inner membrane translocase subunit TIM8 (TIM8) from Candida glabrata (strain ATCC 2001 / BCRC 20586 / JCM 3761 / NBRC 0622 / NRRL Y-65 / CBS 138) (Yeast).